The sequence spans 122 residues: Small ribosomal subunit protein uS13 (122 aa).

Residues 92-122 (HRKQLPVRGQRTHTNARTRKGKAKPIAGKKK) form a disordered region.

It belongs to the universal ribosomal protein uS13 family. Part of the 30S ribosomal subunit. Forms a loose heterodimer with protein S19. Forms two bridges to the 50S subunit in the 70S ribosome.

Located at the top of the head of the 30S subunit, it contacts several helices of the 16S rRNA. In the 70S ribosome it contacts the 23S rRNA (bridge B1a) and protein L5 of the 50S subunit (bridge B1b), connecting the 2 subunits; these bridges are implicated in subunit movement. Contacts the tRNAs in the A and P-sites. The sequence is that of Small ribosomal subunit protein uS13 from Methylobacterium radiotolerans (strain ATCC 27329 / DSM 1819 / JCM 2831 / NBRC 15690 / NCIMB 10815 / 0-1).